Here is a 172-residue protein sequence, read N- to C-terminus: Small ribosomal subunit protein uS5 (172 aa).

Residues 17–80 (MREKMIAVNR…EEARRKMIKV (64 aa)) enclose the S5 DRBM domain.

The protein belongs to the universal ribosomal protein uS5 family. Part of the 30S ribosomal subunit. Contacts proteins S4 and S8.

Its function is as follows. With S4 and S12 plays an important role in translational accuracy. Functionally, located at the back of the 30S subunit body where it stabilizes the conformation of the head with respect to the body. The protein is Small ribosomal subunit protein uS5 of Janthinobacterium sp. (strain Marseille) (Minibacterium massiliensis).